The chain runs to 336 residues: Dihydroorotate dehydrogenase (quinone) (336 aa).

FMN contacts are provided by residues 62–66 (AGLDK) and threonine 86. Lysine 66 is a binding site for substrate. 111–115 (NRMGF) provides a ligand contact to substrate. FMN is bound by residues asparagine 139 and asparagine 172. Position 172 (asparagine 172) interacts with substrate. The active-site Nucleophile is the serine 175. Asparagine 177 is a binding site for substrate. Lysine 217 and threonine 245 together coordinate FMN. 246-247 (NT) is a binding site for substrate. Residues glycine 268, glycine 297, and 318–319 (YS) each bind FMN.

The protein belongs to the dihydroorotate dehydrogenase family. Type 2 subfamily. In terms of assembly, monomer. FMN is required as a cofactor.

Its subcellular location is the cell membrane. The catalysed reaction is (S)-dihydroorotate + a quinone = orotate + a quinol. It participates in pyrimidine metabolism; UMP biosynthesis via de novo pathway; orotate from (S)-dihydroorotate (quinone route): step 1/1. Functionally, catalyzes the conversion of dihydroorotate to orotate with quinone as electron acceptor. The chain is Dihydroorotate dehydrogenase (quinone) from Salmonella arizonae (strain ATCC BAA-731 / CDC346-86 / RSK2980).